The primary structure comprises 87 residues: Small ribosomal subunit protein bS20 (87 aa).

The disordered stretch occupies residues 1 to 26 (MANIKSAKKRAVQSEKARKHNASRRS).

Belongs to the bacterial ribosomal protein bS20 family.

Its function is as follows. Binds directly to 16S ribosomal RNA. This is Small ribosomal subunit protein bS20 from Salmonella typhi.